The sequence spans 447 residues: MVSERQTWSLLQGGQCNEYTVAYINARIIDPASGTDYKGYLLTRGKEILDFGPGFFDPNGAAFAASEVVDCNGHVLMPGIVDLHVHLREPGGEHKETVDTGSRAAAAGGVTTVVCQPNTIPRLENVLVAKYLKMRALESSCVNIEFYGAVTKSDGELCDMASLKDAGALGFTDDGLPVMNALYMKRAFEYAQDLDVVVAQHAEDCNLSDGGCINEGLVSRELGLKGIPDISESIMVSRDIQLLREVPGAHYHVLHISTKKALDIVRAAKREGLRVTCEVTPHHFLLNESAVLEHGTMAKMNPPLRTEEDRLSMISGLEDGTIDCIATDHAPHAAQEKTRPISCCAFGIVGLETLLPLSLELYHNAGMSLMDVLSKLTSKPAEIVRLPRGKIAKGLVADLVIFDLEHVWTIDTAKFSSKSKNSPFQGRKVKGKVLRTVVSGKTVYRAE.

Residues His-84 and His-86 each coordinate Zn(2+). Residues 86-88 (HLR) and Asn-118 contribute to the substrate site. Residues Asp-174, His-201, and His-255 each coordinate Zn(2+). A substrate-binding site is contributed by Asn-301. Asp-328 is a Zn(2+) binding site. Asp-328 is a catalytic residue. Substrate is bound by residues His-332 and 346–347 (FG).

Belongs to the metallo-dependent hydrolases superfamily. DHOase family. Class I DHOase subfamily. The cofactor is Zn(2+).

The enzyme catalyses (S)-dihydroorotate + H2O = N-carbamoyl-L-aspartate + H(+). Its pathway is pyrimidine metabolism; UMP biosynthesis via de novo pathway; (S)-dihydroorotate from bicarbonate: step 3/3. Catalyzes the reversible cyclization of carbamoyl aspartate to dihydroorotate. The chain is Dihydroorotase from Anaplasma phagocytophilum (strain HZ).